The primary structure comprises 249 residues: Thrombin-like enzyme barnettobin (249 aa).

Positions Ala-1–Ala-10 are cleaved as a signal peptide. Positions His-11 to Leu-16 are excised as a propeptide. In terms of domain architecture, Peptidase S1 spans Val-17–Ala-240. Intrachain disulfides connect Cys-23–Cys-154, Cys-41–Cys-57, Cys-89–Cys-247, Cys-133–Cys-201, Cys-165–Cys-180, and Cys-191–Cys-216. Catalysis depends on charge relay system residues His-56 and Asp-101. Residues Asn-145 and Asn-161 are each glycosylated (N-linked (GlcNAc...) asparagine). Catalysis depends on Ser-195, which acts as the Charge relay system. N-linked (GlcNAc...) asparagine glycosylation is present at Asn-242.

This sequence belongs to the peptidase S1 family. Snake venom subfamily. As to quaternary structure, monomer. Post-translationally, glycoprotein, contains approx. 52% carbohydrate which could be removed by N-glycosidase. Glycosylation is important, since deglycosylated barnettobin loses its clotting and defibrinogenating effects. As to expression, expressed by the venom gland.

The protein localises to the secreted. Its activity is regulated as follows. Both coagulant and amidolytic activities are inhibited by PMSF. Amidolytic activity is partially inhibited by DTT, chymostatin, SBTI and TLCK, but not by heparin and EDTA. Its function is as follows. Thrombin-like snake venom serine protease that releases only fibrinopeptide A from human Aalpha chain of fibrinogen (specific coagulant activity was 251.7 NIH thrombin units/mg). Also shows fibrino(geno)lytic activities in vitro and defibrinogenating effects in vivo. In Bothrops barnetti (Barnett's lancehead), this protein is Thrombin-like enzyme barnettobin.